Consider the following 203-residue polypeptide: Outer-membrane lipoprotein carrier protein (203 aa).

Positions 1-21 are cleaved as a signal peptide; sequence MKKLAITCALLSGMVVSQVWA.

The protein belongs to the LolA family. Monomer.

The protein resides in the periplasm. In terms of biological role, participates in the translocation of lipoproteins from the inner membrane to the outer membrane. Only forms a complex with a lipoprotein if the residue after the N-terminal Cys is not an aspartate (The Asp acts as a targeting signal to indicate that the lipoprotein should stay in the inner membrane). This is Outer-membrane lipoprotein carrier protein from Klebsiella pneumoniae subsp. pneumoniae (strain ATCC 700721 / MGH 78578).